Reading from the N-terminus, the 501-residue chain is Pentatricopeptide repeat-containing protein At2g36730 (501 aa).

9 PPR repeats span residues 77 to 111 (TPSTWNMLSRGYSSSDSPVESIWVYSEMKRRGIKP), 112 to 146 (NKLTFPFLLKACASFLGLTAGRQIQVEVLKHGFDF), 147 to 177 (DVYVGNNLIHLYGTCKKTSDARKVFDEMTER), 178 to 212 (NVVSWNSIMTALVENGKLNLVFECFCEMIGKRFCP), 213 to 243 (DETTMVVLLSACGGNLSLGKLVHSQVMVREL), 246 to 276 (NCRLGTALVDMYAKSGGLEYARLVFERMVDK), 277 to 312 (NVWTWSAMIVGLAQYGFAEEALQLFSKMMKESSVRP), 313 to 343 (NYVTFLGVLCACSHTGLVDDGYKYFHEMEKI), and 349 to 379 (MMIHYGAMVDILGRAGRLNEAYDFIKKMPFE). Positions 384–462 (VWRTLLSACS…IAGESCLELG (79 aa)) are type E motif. Residues 463–493 (GSFHRFFSGYDPRSEYVSIYELLDLFKFQLT) are type E(+) motif.

It belongs to the PPR family. PCMP-E subfamily.

The polypeptide is Pentatricopeptide repeat-containing protein At2g36730 (PCMP-E44) (Arabidopsis thaliana (Mouse-ear cress)).